A 189-amino-acid chain; its full sequence is Mercury resistance operon ORF3 (189 aa).

The tat-type signal signal peptide spans 1–27; that stretch reads MTSPSPTARRTRLRRRTALALAAAATA. The 152-residue stretch at 38 to 189 folds into the Thioredoxin domain; the sequence is TKANTPATRA…IQDALKKAGA (152 aa).

Predicted to be exported by the Tat system. The position of the signal peptide cleavage has not been experimentally proven.

The protein resides in the secreted. Functionally, probable mercury binding protein. The protein is Mercury resistance operon ORF3 of Streptomyces lividans.